We begin with the raw amino-acid sequence, 312 residues long: DNA-directed RNA polymerase subunit alpha (312 aa).

Residues 1-229 (MLQYQIDRIE…ELFQPLATVT (229 aa)) are alpha N-terminal domain (alpha-NTD). The tract at residues 239 to 312 (EPSAEAQIPL…ISIPQSRTSA (74 aa)) is alpha C-terminal domain (alpha-CTD).

This sequence belongs to the RNA polymerase alpha chain family. In terms of assembly, in cyanobacteria the RNAP catalytic core is composed of 2 alpha, 1 beta, 1 beta', 1 gamma and 1 omega subunit. When a sigma factor is associated with the core the holoenzyme is formed, which can initiate transcription.

It carries out the reaction RNA(n) + a ribonucleoside 5'-triphosphate = RNA(n+1) + diphosphate. In terms of biological role, DNA-dependent RNA polymerase catalyzes the transcription of DNA into RNA using the four ribonucleoside triphosphates as substrates. This Synechococcus sp. (strain CC9605) protein is DNA-directed RNA polymerase subunit alpha.